The following is a 944-amino-acid chain: Protein translocase subunit SecA (944 aa).

ATP is bound by residues glutamine 77, 95–99 (GEGKT), and aspartate 484. The interval 920–944 (EQEKQTRKKKKKKPHEDESSKTKIG) is disordered. A compositionally biased stretch (basic and acidic residues) spans 933 to 944 (PHEDESSKTKIG).

It belongs to the SecA family. In terms of assembly, monomer and homodimer. Part of the essential Sec protein translocation apparatus which comprises SecA, SecYEG and auxiliary proteins SecDF. Other proteins may also be involved.

Its subcellular location is the cell membrane. The protein localises to the cytoplasm. It carries out the reaction ATP + H2O + cellular proteinSide 1 = ADP + phosphate + cellular proteinSide 2.. Part of the Sec protein translocase complex. Interacts with the SecYEG preprotein conducting channel. Has a central role in coupling the hydrolysis of ATP to the transfer of proteins into and across the cell membrane, serving as an ATP-driven molecular motor driving the stepwise translocation of polypeptide chains across the membrane. This Mycoplasma mycoides subsp. mycoides SC (strain CCUG 32753 / NCTC 10114 / PG1) protein is Protein translocase subunit SecA.